Here is a 976-residue protein sequence, read N- to C-terminus: MEYHCVLFTVLLQLIIQPGRSRPTITPEGPRLTVPLYSNFSLHCQSNSTVRWQHENRPMRTLKEEQRQGQQTILKVNRAGPQHLGKYSCREEKTGEKSSIYVYVKDPENPFRRTIVFDIVAAEGDTTVIPCLATDPDMKNLNLQKCDGQPLPNSLRYSASLETGVSVEKVRKEFEGCYVCVGTLDAATVKSGRYQLTVRLVPDAPPPITLGQPQRVLLTQGEKLSLSCSTSNVNSDIAVKWKAPNGVNPSVHQNSHLLTEPITHVRTAILSLSSVTMQDAGNYSCEAINEKGTTAKPVWVNIYEKGFINITSVDNSTRRVRAGESLSLRVVMNAYPKPHTFSWSYSGVKLTNTTDHVITSRTHGNSYTSELKLVRLKVSESGIYTFSCLNRDATIRQTFEVHVISKPQIVSYEGPIDGQVRCVAEGYPTPQIKWYYCDLPHSRCSNLLNATQEEEDVVTVTMTNPPFGKGAVESRLNITKNNYATLECVASANGEIVYTLFSISENTVPHELFTPLLIGFVAAAVILVLILIVLTYKYMQKPKYQIQWKVIEGIHGNNYVYIDPTQLPYDHQWEFPRDKLRFGKTLGSGAFGKVVEATAYGMSKADTVMTVAVKMLKPSAHATEKEALMSELKVLSYLGNHINIVNLLGACTVGGPTLVITEYCCFGDLLNFLRRRRVYFYYTTLGEDAYYRNVMMQSEPNDSRNGYMTMKPSVLGILSSENRRSLNKGDSYSDSDAVSEILQEDGLTLDTEDLLSFSYQVAKGMDFLASKNCIHRDLAARNILLTQGRVAKICDFGLARDITTDSNYVVKGNARLPVKWMSPESIFECVYTFESDVWSYGILLWEIFSLGSSPYPGMPVDSKFYKMIKEGYRMESPEFSPSEMYDIMHSCWDADPVKRPSFSKIVEKIEQQISDSTKHIYLNFSSRLPAAPGPREESSSHVHRLNSVGSHSTATQPLLSSNDVFLDRSSPSHPVV.

The first 21 residues, 1–21 (MEYHCVLFTVLLQLIIQPGRS), serve as a signal peptide directing secretion. Residues 22–515 (RPTITPEGPR…NTVPHELFTP (494 aa)) are Extracellular-facing. 5 Ig-like C2-type domains span residues 23–105 (PTIT…VYVK), 100–199 (IYVY…LTVR), 206–301 (PPIT…VWVN), 308–402 (INIT…FEVH), and 399–504 (FEVH…FSIS). N-linked (GlcNAc...) asparagine glycans are attached at residues asparagine 39 and asparagine 47. Disulfide bonds link cysteine 44-cysteine 89, cysteine 131-cysteine 180, cysteine 146-cysteine 177, and cysteine 228-cysteine 285. N-linked (GlcNAc...) asparagine glycans are attached at residues asparagine 282, asparagine 309, asparagine 315, asparagine 352, asparagine 449, and asparagine 477. Cysteine 422 and cysteine 488 are oxidised to a cystine. A helical transmembrane segment spans residues 516–536 (LLIGFVAAAVILVLILIVLTY). Residues 537 to 976 (KYMQKPKYQI…DRSSPSHPVV (440 aa)) are Cytoplasmic-facing. Tyrosine 559 provides a ligand contact to Mg(2+). Tyrosine 559 and tyrosine 561 each carry phosphotyrosine; by autocatalysis. The Protein kinase domain occupies 580 to 922 (LRFGKTLGSG…ISDSTKHIYL (343 aa)). Residues 587–594 (GSGAFGKV), lysine 614, and 662–668 (EYCCFGD) contribute to the ATP site. 2 positions are modified to phosphotyrosine; by autocatalysis: tyrosine 691 and tyrosine 707. The active-site Proton acceptor is the aspartate 777. Residue arginine 781 coordinates ATP. Asparagine 782 and aspartate 795 together coordinate Mg(2+). Residues tyrosine 808 and tyrosine 921 each carry the phosphotyrosine; by autocatalysis modification. Residues 929–976 (PAAPGPREESSSHVHRLNSVGSHSTATQPLLSSNDVFLDRSSPSHPVV) are disordered. Residues 947 to 976 (SVGSHSTATQPLLSSNDVFLDRSSPSHPVV) show a composition bias toward polar residues.

The protein belongs to the protein kinase superfamily. Tyr protein kinase family. CSF-1/PDGF receptor subfamily. Ubiquitinated. Rapidly ubiquitinated after autophosphorylation induced by kitlg/scf binding, leading to internalization and degradation. Post-translationally, autophosphorylated on tyrosine residues. Phosphorylated tyrosine residues are important for interaction with specific binding partners. As to expression, expressed in cells of the neural crest-melanocyte lineage. In the embryo, also expressed in mesodermal cells that give rise to hematopoietic precursors, notochord, neural crest-derived cells of the branchial arches, pineal gland, retina and mechanoreceptive sensory cells of lateral line neuromasts. Not detected in primordial germ cells or larval gut.

The protein localises to the cell membrane. The enzyme catalyses L-tyrosyl-[protein] + ATP = O-phospho-L-tyrosyl-[protein] + ADP + H(+). Tyrosine-protein kinase that acts as a cell-surface receptor for the cytokine kitlg/scf and plays a role in the regulation of cell survival and proliferation, hematopoiesis, stem cell maintenance, gametogenesis, and in mast cell development, migration and function. Required for the migration of cells in the melanocyte lineage and the survival of embryonic melanocytes. Required for the differentiation of some, but not all, melanocytes. Not essential for hematopoiesis or primordial germ cell development. In Danio rerio (Zebrafish), this protein is Mast/stem cell growth factor receptor kita (kita).